We begin with the raw amino-acid sequence, 428 residues long: Adenylosuccinate synthetase (428 aa).

Residues 12–18 (GDEGKGK) and 40–42 (GHT) contribute to the GTP site. Aspartate 13 serves as the catalytic Proton acceptor. The Mg(2+) site is built by aspartate 13 and glycine 40. Residues 13-16 (DEGK), 38-41 (NAGH), threonine 130, arginine 144, glutamine 225, threonine 240, and arginine 304 contribute to the IMP site. The active-site Proton donor is histidine 41. Residue 300–306 (ATTGRPR) coordinates substrate. Residues arginine 306, 332 to 334 (KLD), and 415 to 417 (SVG) contribute to the GTP site.

The protein belongs to the adenylosuccinate synthetase family. Homodimer. Mg(2+) is required as a cofactor.

It is found in the cytoplasm. The catalysed reaction is IMP + L-aspartate + GTP = N(6)-(1,2-dicarboxyethyl)-AMP + GDP + phosphate + 2 H(+). It functions in the pathway purine metabolism; AMP biosynthesis via de novo pathway; AMP from IMP: step 1/2. Its function is as follows. Plays an important role in the de novo pathway of purine nucleotide biosynthesis. Catalyzes the first committed step in the biosynthesis of AMP from IMP. This Lawsonia intracellularis (strain PHE/MN1-00) protein is Adenylosuccinate synthetase.